The chain runs to 647 residues: MGKIHELDSVLADQIAAGEVIERPASIVKELAENSLDANSHRIDIIVEEAGLKSVRVIDDGQGIEADDVARAFLRHATSKIADKGDLFKVTTMGFRGEALPSIASVADVLLTTATGGAAGSQIHIKGGEILAHGQASARPGTDILVSDLFYNTPARLKYLKSPHTELARIVDIVNRLALANPTVAFSLTHDGKEVFRSAGNGNLKQVVAAIYGVQAGRKMVEVKGEDPNFKVSGLVSLPELTRAGRQYMTIMINHRYVRNFQLTKALVAGYRSKLMVGRYPLAVINIDLDPVLVDVNVHPAKREVRLSMEPQLVDLLERVVSQAIDQQNLIPDVGDRADELLTREQTVHAPRSAAPRVSERASDEPPAWQPSPTSGEPVIISRRSELASPAVQAFDRRYQNEEVATPFGAQADAKVSQAQPAVEQVSLDIDDRGDVASERFPDLTYLGQLHGTYLLAQASDGLYIVDQHAAQERINYEYYREEIGKVSADQQNFLTPLVLNYSLADALKIQQHQAVLAACGLKLEPFGQNSFMLASHPTWFVAGQEEDTAREMIDWVLASGKLSVKDFRAKAAIMMSCKRAIKANHRLDERQAKALLARLPQCENPFNCPHGRPVTIHFTTTDLEKLFKRIQESHQPFADDFDDHED.

A disordered region spans residues 346-378 (QTVHAPRSAAPRVSERASDEPPAWQPSPTSGEP).

Belongs to the DNA mismatch repair MutL/HexB family.

Its function is as follows. This protein is involved in the repair of mismatches in DNA. It is required for dam-dependent methyl-directed DNA mismatch repair. May act as a 'molecular matchmaker', a protein that promotes the formation of a stable complex between two or more DNA-binding proteins in an ATP-dependent manner without itself being part of a final effector complex. This chain is DNA mismatch repair protein MutL, found in Limosilactobacillus fermentum (strain NBRC 3956 / LMG 18251) (Lactobacillus fermentum).